The primary structure comprises 189 residues: Shikimate kinase (189 aa).

11-16 serves as a coordination point for ATP; the sequence is GTGKSA. A Mg(2+)-binding site is contributed by S15. Substrate-binding residues include D33, R57, and G79. R117 is a binding site for ATP. A substrate-binding site is contributed by R135.

The protein belongs to the shikimate kinase family. In terms of assembly, monomer. The cofactor is Mg(2+).

Its subcellular location is the cytoplasm. It carries out the reaction shikimate + ATP = 3-phosphoshikimate + ADP + H(+). It functions in the pathway metabolic intermediate biosynthesis; chorismate biosynthesis; chorismate from D-erythrose 4-phosphate and phosphoenolpyruvate: step 5/7. In terms of biological role, catalyzes the specific phosphorylation of the 3-hydroxyl group of shikimic acid using ATP as a cosubstrate. This chain is Shikimate kinase, found in Desulforudis audaxviator (strain MP104C).